Here is a 1247-residue protein sequence, read N- to C-terminus: Nidogen-1 (1247 aa).

The N-terminal stretch at 1-28 (MLASSSRIRAAWTRALLLPLLLAGPVGC) is a signal peptide. The 163-residue stretch at 106–268 (PFLADLDTTD…GVWVFEIGSP (163 aa)) folds into the NIDO domain. Sulfotyrosine is present on residues Y289 and Y296. Positions 386 to 426 (SRQTCANNRHQCSVHAECRDYATGFCCSCVAGYTGNGRQCV) constitute an EGF-like 1 domain. Cystine bridges form between C390-C403, C397-C412, C411-C618, C414-C425, C672-C685, C679-C695, C697-C708, C714-C727, C721-C736, C738-C750, C762-C777, C769-C787, C789-C800, C806-C817, C811-C826, C828-C839, C849-C878, C889-C896, and C898-C919. Positions 430–667 (SPQRVNGKVK…GPVREGSPDA (238 aa)) constitute a Nidogen G2 beta-barrel domain. The EGF-like 2 domain occupies 668–709 (LQNPCYIGTHGCDTNAACRPGPRTQFTCECSIGFRGDGRTCY). The Cell attachment site motif lies at 702–704 (RGD). An EGF-like 3; calcium-binding domain is found at 710–751 (DIDECSEQPSVCGSHTICNNHPGTFRCECVEGYQFSDEGTCV). In terms of domain architecture, EGF-like 4 spans 758–801 (PINYCETGLHNCDIPQRAQCIYTGGSSYTCSCLPGFSGDGQACQ). Residues 802–840 (DVDECQPSRCHPDAFCYNTPGSFTCQCKPGYQGDGFRCV) enclose the EGF-like 5; calcium-binding domain. The 74-residue stretch at 846–919 (KTRCQHEREH…RTRPGMTPPC (74 aa)) folds into the Thyroglobulin type-1 domain. 2 O-linked (GalNAc...) threonine glycosylation sites follow: T922 and T935. 4 LDL-receptor class B repeats span residues 990–1032 (KMVY…DHLG), 1033–1075 (RNIF…DSVR), 1076–1120 (GNLY…DAFS), and 1121–1162 (SQLC…YGKN). An EGF-like 6 domain is found at 1208 to 1244 (GHNYCSVNNGGCTHLCLATPGSRTCRCPDNTLGVDCI). 3 disulfide bridges follow: C1212-C1223, C1219-C1232, and C1234-C1243.

Interacts with FBLN1. Interacts with LGALS3BP. Interacts with PLXDC1. Interacts with SVEP1. N- and O-glycosylated.

It is found in the secreted. Its subcellular location is the extracellular space. The protein localises to the extracellular matrix. It localises to the basement membrane. Functionally, sulfated glycoprotein widely distributed in basement membranes and tightly associated with laminin. Also binds to collagen IV and perlecan. It probably has a role in cell-extracellular matrix interactions. This Homo sapiens (Human) protein is Nidogen-1 (NID1).